A 226-amino-acid polypeptide reads, in one-letter code: Urease accessory protein UreF (226 aa).

This sequence belongs to the UreF family. UreD, UreF and UreG form a complex that acts as a GTP-hydrolysis-dependent molecular chaperone, activating the urease apoprotein by helping to assemble the nickel containing metallocenter of UreC. The UreE protein probably delivers the nickel.

The protein localises to the cytoplasm. In terms of biological role, required for maturation of urease via the functional incorporation of the urease nickel metallocenter. In Burkholderia mallei (strain NCTC 10247), this protein is Urease accessory protein UreF.